The primary structure comprises 445 residues: ATP-dependent protease ATPase subunit HslU (445 aa).

ATP contacts are provided by residues Val18, 60–65, Asp254, Glu319, and Arg391; that span reads GVGKTE.

Belongs to the ClpX chaperone family. HslU subfamily. As to quaternary structure, a double ring-shaped homohexamer of HslV is capped on each side by a ring-shaped HslU homohexamer. The assembly of the HslU/HslV complex is dependent on binding of ATP.

The protein resides in the cytoplasm. In terms of biological role, ATPase subunit of a proteasome-like degradation complex; this subunit has chaperone activity. The binding of ATP and its subsequent hydrolysis by HslU are essential for unfolding of protein substrates subsequently hydrolyzed by HslV. HslU recognizes the N-terminal part of its protein substrates and unfolds these before they are guided to HslV for hydrolysis. The chain is ATP-dependent protease ATPase subunit HslU from Alcanivorax borkumensis (strain ATCC 700651 / DSM 11573 / NCIMB 13689 / SK2).